The sequence spans 359 residues: UDP-N-acetylglucosamine--N-acetylmuramyl-(pentapeptide) pyrophosphoryl-undecaprenol N-acetylglucosamine transferase (359 aa).

UDP-N-acetyl-alpha-D-glucosamine-binding positions include 15 to 17 (TGG), asparagine 127, arginine 166, serine 191, isoleucine 245, 264 to 269 (ALTVSE), and glutamine 290.

Belongs to the glycosyltransferase 28 family. MurG subfamily.

Its subcellular location is the cell inner membrane. It carries out the reaction di-trans,octa-cis-undecaprenyl diphospho-N-acetyl-alpha-D-muramoyl-L-alanyl-D-glutamyl-meso-2,6-diaminopimeloyl-D-alanyl-D-alanine + UDP-N-acetyl-alpha-D-glucosamine = di-trans,octa-cis-undecaprenyl diphospho-[N-acetyl-alpha-D-glucosaminyl-(1-&gt;4)]-N-acetyl-alpha-D-muramoyl-L-alanyl-D-glutamyl-meso-2,6-diaminopimeloyl-D-alanyl-D-alanine + UDP + H(+). It functions in the pathway cell wall biogenesis; peptidoglycan biosynthesis. In terms of biological role, cell wall formation. Catalyzes the transfer of a GlcNAc subunit on undecaprenyl-pyrophosphoryl-MurNAc-pentapeptide (lipid intermediate I) to form undecaprenyl-pyrophosphoryl-MurNAc-(pentapeptide)GlcNAc (lipid intermediate II). The sequence is that of UDP-N-acetylglucosamine--N-acetylmuramyl-(pentapeptide) pyrophosphoryl-undecaprenol N-acetylglucosamine transferase from Pseudomonas putida (strain W619).